The sequence spans 341 residues: Protein FAM50A (341 aa).

Disordered stretches follow at residues 1-27 and 80-147; these read MAQY…EREQ and LVKE…EIEE. A compositionally biased stretch (basic and acidic residues) spans 80–115; that stretch reads LVKEREKQLAKKEQSKELQLKLEKQKEKKRKEEQKR. Residues 125–147 show a composition bias toward acidic residues; sequence DEGEDEEEEEEEEEEEEEDEIEE.

The protein belongs to the FAM50 family.

The protein resides in the nucleus. Functionally, probably involved in the regulation of pre-mRNA splicing. This is Protein FAM50A (fam50a) from Danio rerio (Zebrafish).